We begin with the raw amino-acid sequence, 298 residues long: Probable phosphite transport system-binding protein HtxB (298 aa).

The first 33 residues, 1–33, serve as a signal peptide directing secretion; sequence MQVFTLFSKFKKALTRAILAFIATIIVCTPAQA.

It belongs to the phosphate/phosphite/phosphonate binding protein family.

Functionally, probably forms part of a binding-protein-dependent hypophosphite transporter. In Stutzerimonas stutzeri (Pseudomonas stutzeri), this protein is Probable phosphite transport system-binding protein HtxB (htxB).